We begin with the raw amino-acid sequence, 186 residues long: MAAKYVFVVAACSALAQAGIVRRDASTPLQDLEKHAAEFQKTFSEQLNAFTNSKDTKEFNTALKEGSDSVLQQLNALASSLQKALNDANGKAKEALEQTRTNLERTAEELRRAHPDVERQAGALRDRLQTAVQATVQETQKLAKTVGANLEETNKKLAPQIKSAYDDFVKQAQEVQKKLHEAASKQ.

The first 18 residues, 1–18, serve as a signal peptide directing secretion; it reads MAAKYVFVVAACSALAQA. Residues 19–23 constitute a propeptide that is removed on maturation; that stretch reads GIVRR.

The protein belongs to the insect apolipophorin-3 family. As to quaternary structure, equilibrium between a soluble monomer and a bound lipoprotein form. Apolipophorin-3 associates with lipophorin during lipid loading until each particle contains 9 or 14 molecules of apolipophorin-3. In terms of tissue distribution, expressed in hemolymph. Also found in hemocytes and fat body.

Its subcellular location is the secreted. Assists in the loading of diacylglycerol, generated from triacylglycerol stores in the fat body through the action of adipokinetic hormone, into lipophorin, the hemolymph lipoprotein. It increases the lipid carrying capacity of lipophorin by covering the expanding hydrophobic surface resulting from diacylglycerol uptake. It thus plays a critical role in the transport of lipids during flight in several species of insects. Has antibacterial activity against the Gram-positive bacteria L.monocytogenes (MIC=6.5 uM). Lacks antibacterial activity against the Gram-positive bacteria B.circulans, M.luteus, S.aureus, and S.lutea, and the Gram-negative bacteria E.coli D31, E.coli ATCC 25922, and S.typhimurium. Lacks antifungal activity against S.cerevisiae, P.pastoris, Z.marxianus, C.albicans, C.wickerhamii, A.niger, F.oxysporum, and T.harizianum. In Galleria mellonella (Greater wax moth), this protein is Apolipophorin-3.